The following is a 469-amino-acid chain: Crinkler effector protein 1 (469 aa).

The N-terminal stretch at 1–17 is a signal peptide; sequence MSITLLCLIKGNTLANA. The segment at 18–57 is LQLFLAK-like domain; that stretch reads FPVDIDKDQLVGHLKKVIKAEQPQTFANVDAKDLKLWRVP. The DWL domain stretch occupies residues 58-96; the sequence is ISDDHDDQLRNLSLEDSDELLAIRKISKYFPDSPPEECI. Residue Asn68 is glycosylated (N-linked (GlcNAc...) asparagine). The HVLVXXP motif signature appears at 97–103; sequence HVLVEPP. N-linked (GlcNAc...) asparagine glycosylation is found at Asn126, Asn181, and Asn248.

The protein belongs to the Crinkler effector family. Homodimer.

Its subcellular location is the secreted. It localises to the host nucleus. Effector that participates in the arbuscule development step of the symbiosis. Arbuscular mycorrhizal (AM) symbiosis is one of the most prominent and beneficial plant-microbe interactions that facilitates mineral nutrition and confers tolerance to biotic and abiotic stresses. Is not involved in cell death processes. The protein is Crinkler effector protein 1 of Rhizophagus irregularis (strain DAOM 181602 / DAOM 197198 / MUCL 43194) (Arbuscular mycorrhizal fungus).